The primary structure comprises 316 residues: MSVFTPLERSTLEAFLAPYDLGRLRDFRGIAEGSENSNFFVSLEHGEFVLTLVERGPVQDLPFFIELLDVLHEDGLPVPYALRTRDGEALRRLEGKPALLQPRLAGRHERQPNAHHCQEVGDLLGHLHAATRGRILERPSDRGLPWMLEQGANLAPRLPEQARALLAPALAEIAALDAERPALPRANLHADLFRDNVLFDGPHLAGLIDFYNACSGWMLYDLAITLNDWCSNTDGSLDPARARALLAAYANRRPFTALEAEHWPSMLRVACVRFWLSRLIAAEAFAGQDVLIHDPAEFEIRLAQRQNVEIHLPFAL.

The protein belongs to the pseudomonas-type ThrB family.

The enzyme catalyses L-homoserine + ATP = O-phospho-L-homoserine + ADP + H(+). It functions in the pathway amino-acid biosynthesis; L-threonine biosynthesis; L-threonine from L-aspartate: step 4/5. The chain is Homoserine kinase (thrB) from Pseudomonas aeruginosa (strain ATCC 15692 / DSM 22644 / CIP 104116 / JCM 14847 / LMG 12228 / 1C / PRS 101 / PAO1).